Here is a 241-residue protein sequence, read N- to C-terminus: Glucosamine-6-phosphate deaminase (241 aa).

The Proton acceptor; for enolization step role is filled by aspartate 67. Catalysis depends on asparagine 136, which acts as the For ring-opening step. The active-site Proton acceptor; for ring-opening step is histidine 138. Glutamate 143 acts as the For ring-opening step in catalysis.

Belongs to the glucosamine/galactosamine-6-phosphate isomerase family. NagB subfamily.

It catalyses the reaction alpha-D-glucosamine 6-phosphate + H2O = beta-D-fructose 6-phosphate + NH4(+). It functions in the pathway amino-sugar metabolism; N-acetylneuraminate degradation; D-fructose 6-phosphate from N-acetylneuraminate: step 5/5. Functionally, catalyzes the reversible isomerization-deamination of glucosamine 6-phosphate (GlcN6P) to form fructose 6-phosphate (Fru6P) and ammonium ion. The chain is Glucosamine-6-phosphate deaminase from Clostridium tetani (strain Massachusetts / E88).